Reading from the N-terminus, the 662-residue chain is Probable quinol oxidase subunit 1 (662 aa).

Transmembrane regions (helical) follow at residues 14–34 (WMIT…IAVI) and 58–78 (IMYL…ALLI). His-102 is a binding site for Fe(II)-heme a. 8 helical membrane passes run 103–123 (GVIM…NIVV), 140–160 (VSFW…IIGG), 187–207 (IAIQ…FVTI), 228–248 (FITT…LALM), 273–293 (FFWV…FGIY), 311–331 (MVWA…HHFF), 336–356 (GALI…PTGV), and 376–396 (MLFS…GVML). His-279, Tyr-283, His-328, and His-329 together coordinate Cu cation. Positions 279 to 283 (HPEVY) form a cross-link, 1'-histidyl-3'-tyrosine (His-Tyr). Heme a3 is bound at residue His-414. 5 consecutive transmembrane segments (helical) span residues 415-435 (FHYT…IFWY), 451-471 (CFWF…ILGL), 493-513 (ISTI…VSIV), 587-604 (PVGF…FFLI), and 608-627 (VIPA…YRSF). A Fe(II)-heme a-binding site is contributed by His-416.

It belongs to the heme-copper respiratory oxidase family. Requires Cu cation as cofactor. Ferriheme a is required as a cofactor. The cofactor is Heme A3..

It is found in the cell membrane. The catalysed reaction is 2 a quinol + O2 = 2 a quinone + 2 H2O. It functions in the pathway energy metabolism; oxidative phosphorylation. In terms of biological role, catalyzes quinol oxidation with the concomitant reduction of oxygen to water. The protein is Probable quinol oxidase subunit 1 (qoxB) of Staphylococcus aureus (strain MRSA252).